We begin with the raw amino-acid sequence, 293 residues long: ATP synthase gamma chain (293 aa).

This sequence belongs to the ATPase gamma chain family. As to quaternary structure, F-type ATPases have 2 components, CF(1) - the catalytic core - and CF(0) - the membrane proton channel. CF(1) has five subunits: alpha(3), beta(3), gamma(1), delta(1), epsilon(1). CF(0) has three main subunits: a, b and c.

The protein localises to the cell inner membrane. Its function is as follows. Produces ATP from ADP in the presence of a proton gradient across the membrane. The gamma chain is believed to be important in regulating ATPase activity and the flow of protons through the CF(0) complex. The sequence is that of ATP synthase gamma chain from Chlorobium chlorochromatii (strain CaD3).